Consider the following 277-residue polypeptide: S-formylglutathione hydrolase FrmB (277 aa).

Catalysis depends on charge relay system residues Ser-145, Asp-221, and His-254.

It belongs to the esterase D family.

It catalyses the reaction S-formylglutathione + H2O = formate + glutathione + H(+). Serine hydrolase involved in the detoxification of formaldehyde. Hydrolyzes S-formylglutathione to glutathione and formate. The chain is S-formylglutathione hydrolase FrmB (frmB) from Escherichia coli O157:H7.